Here is a 138-residue protein sequence, read N- to C-terminus: 1,4-dihydroxy-2-naphthoyl-CoA hydrolase (138 aa).

Residue Asp16 is part of the active site.

This sequence belongs to the 4-hydroxybenzoyl-CoA thioesterase family. DHNA-CoA hydrolase subfamily.

The catalysed reaction is 1,4-dihydroxy-2-naphthoyl-CoA + H2O = 1,4-dihydroxy-2-naphthoate + CoA + H(+). Its pathway is cofactor biosynthesis; phylloquinone biosynthesis. The protein operates within quinol/quinone metabolism; 1,4-dihydroxy-2-naphthoate biosynthesis; 1,4-dihydroxy-2-naphthoate from chorismate: step 7/7. Its function is as follows. Catalyzes the specific hydrolysis of 1,4-dihydroxy-2-naphthoyl-CoA (DHNA-CoA) to 1,4-dihydroxy-2-naphthoate (DHNA), a reaction involved in phylloquinone (vitamin K1) biosynthesis. Is not active on benzoyl-CoA, phenylacetyl-CoA and aliphatic acyl-CoA thioesters. The sequence is that of 1,4-dihydroxy-2-naphthoyl-CoA hydrolase from Synechocystis sp. (strain ATCC 27184 / PCC 6803 / Kazusa).